A 343-amino-acid chain; its full sequence is TATA box-binding protein-like 2 (343 aa).

The tract at residues 71–152 (PDEVTQENKD…SDSLSLASIT (82 aa)) is disordered. Basic and acidic residues predominate over residues 76-90 (QENKDQPVISKHETE). The segment covering 94–127 (ESQSPQSRLPSPSEQDVGLGLNSSSLSNSHSQLH) has biased composition (low complexity). Over residues 143–152 (SDSLSLASIT) the composition is skewed to polar residues.

This sequence belongs to the TBP family. Interacts with TAF3. As to expression, ubiquitously expressed in all tissues examined with highest levels in heart, lung, ovary, spleen and testes.

It localises to the cytoplasm. The protein resides in the nucleus. Its function is as follows. Transcription factor required in complex with TAF3 for the differentiation of myoblasts into myocytes. The complex replaces TFIID at specific promoters at an early stage in the differentiation process. The polypeptide is TATA box-binding protein-like 2 (Homo sapiens (Human)).